A 1091-amino-acid chain; its full sequence is Error-prone DNA polymerase 1 (1091 aa).

Residues 1051 to 1064 (RGDEFHHGMPDDHR) are compositionally biased toward basic and acidic residues. The interval 1051-1080 (RGDEFHHGMPDDHRAIRKRPPPSNHDDDEV) is disordered.

The protein belongs to the DNA polymerase type-C family. DnaE2 subfamily.

The protein resides in the cytoplasm. The enzyme catalyses DNA(n) + a 2'-deoxyribonucleoside 5'-triphosphate = DNA(n+1) + diphosphate. Functionally, DNA polymerase involved in damage-induced mutagenesis and translesion synthesis (TLS). It is not the major replicative DNA polymerase. The polypeptide is Error-prone DNA polymerase 1 (Agrobacterium fabrum (strain C58 / ATCC 33970) (Agrobacterium tumefaciens (strain C58))).